The sequence spans 1447 residues: Sister chromatid cohesion protein PDS5 homolog B (1447 aa).

One copy of the HEAT repeat lies at 383-419; sequence LLVNDHLLNFVRERTLDKRWRVRKEAMMGLAQIYKKY. Residue K1136 is modified to N6-acetyllysine. Residues 1137-1155 show a composition bias toward polar residues; the sequence is PLSSAGKQSQTKSSRMETV. The disordered stretch occupies residues 1137 to 1447; the sequence is PLSSAGKQSQ…RRRSSKRERR (311 aa). S1140, S1162, S1166, S1176, S1182, and S1191 each carry phosphoserine. Residues 1156–1167 show a composition bias toward low complexity; the sequence is SNASSSSNPSSP. Residues 1172–1184 are compositionally biased toward basic and acidic residues; the sequence is GRLDSTEMDHSEN. Basic and acidic residues predominate over residues 1196-1214; that stretch reads KKSDKREDSDLVRSELEKP. Phosphoserine is present on S1221. The span at 1225-1243 shows a compositional bias: basic and acidic residues; sequence PEEKLGMDDLSKLVQEQKP. Positions 1245 to 1254 are enriched in basic residues; the sequence is GSQRGRKRGH. The a.T hook 1 DNA-binding region spans 1247–1259; the sequence is QRGRKRGHAASES. A phosphoserine mark is found at S1257 and S1259. A compositionally biased stretch (basic and acidic residues) spans 1265–1274; sequence PEEKRHKEEL. Phosphoserine is present on S1283. The a.T hook 2 DNA-binding region spans 1287-1299; that stretch reads KGKRGRPPKPLGG. Composition is skewed to basic residues over residues 1309 to 1318 and 1341 to 1352; these read TSKKGNKKKP and KSKQQRTSKRAQ. A phosphoserine mark is found at S1357 and S1365. Residues 1358–1371 are compositionally biased toward polar residues; the sequence is PETSAVESTQSTPQ. Position 1366 is a phosphothreonine (T1366). Residue S1368 is modified to Phosphoserine. Phosphothreonine is present on residues T1369 and T1380. The segment at residues 1371 to 1383 is a DNA-binding region (a.T hook 3); it reads QKGRGRPSKTPSP. Low complexity predominate over residues 1378–1387; that stretch reads SKTPSPSQPK. Phosphoserine occurs at positions 1382, 1416, and 1419. A compositionally biased stretch (acidic residues) spans 1422-1432; sequence TTQEGAEEEDI. The segment covering 1437–1447 has biased composition (basic residues); it reads VRRRSSKRERR.

Belongs to the PDS5 family. In terms of assembly, interacts with the cohesin complex. Interacts with RAD21; the interaction is direct. Interacts with WAPL (via FGF motifs) or CDCA5 (via the FGF motif); the interaction is direct, cohesin-dependent and competitive. In terms of tissue distribution, highly expressed in intact prostate with levels decreasing after castration. Expressed exclusively in prostate cells inhibited from proliferating by long-term androgen exposure.

It is found in the nucleus. Functionally, regulator of sister chromatid cohesion in mitosis which may stabilize cohesin complex association with chromatin. May couple sister chromatid cohesion during mitosis to DNA replication. Cohesion ensures that chromosome partitioning is accurate in both meiotic and mitotic cells and plays an important role in DNA repair. Plays a role in androgen-induced proliferative arrest in prostate cells. The chain is Sister chromatid cohesion protein PDS5 homolog B (Pds5b) from Rattus norvegicus (Rat).